A 246-amino-acid polypeptide reads, in one-letter code: Ribonuclease PH (246 aa).

Phosphate contacts are provided by residues Arg-91 and 129–131 (GTR).

Belongs to the RNase PH family. Homohexameric ring arranged as a trimer of dimers.

The catalysed reaction is tRNA(n+1) + phosphate = tRNA(n) + a ribonucleoside 5'-diphosphate. In terms of biological role, phosphorolytic 3'-5' exoribonuclease that plays an important role in tRNA 3'-end maturation. Removes nucleotide residues following the 3'-CCA terminus of tRNAs; can also add nucleotides to the ends of RNA molecules by using nucleoside diphosphates as substrates, but this may not be physiologically important. Probably plays a role in initiation of 16S rRNA degradation (leading to ribosome degradation) during starvation. This chain is Ribonuclease PH, found in Burkholderia ambifaria (strain ATCC BAA-244 / DSM 16087 / CCUG 44356 / LMG 19182 / AMMD) (Burkholderia cepacia (strain AMMD)).